The primary structure comprises 392 residues: Integrin-linked kinase-associated serine/threonine phosphatase 2C (392 aa).

M1 bears the N-acetylmethionine mark. The interval 1 to 91 (MDLFGDLPEP…PEEEKNGGEE (91 aa)) is disordered. The span at 31 to 40 (DLPPTSSTDS) shows a compositional bias: low complexity. The segment covering 59 to 70 (SGSLATSGSQVV) has biased composition (polar residues). A compositionally biased stretch (basic and acidic residues) spans 72–91 (NEGKGAKRKAPEEEKNGGEE). A PPM-type phosphatase domain is found at 108 to 390 (KGYVAERKGE…DNVTVMVVRI (283 aa)). 2 residues coordinate Mn(2+): D152 and G153. K210 carries the N6-acetyllysine modification. Mn(2+) contacts are provided by D326 and D381.

It belongs to the PP2C family. Interacts with ILK. The cofactor is Mg(2+). It depends on Mn(2+) as a cofactor. In terms of tissue distribution, widely expressed. Highest expression observed in kidney, liver and muscle.

Its subcellular location is the cytoplasm. It catalyses the reaction O-phospho-L-seryl-[protein] + H2O = L-seryl-[protein] + phosphate. The enzyme catalyses O-phospho-L-threonyl-[protein] + H2O = L-threonyl-[protein] + phosphate. Protein phosphatase that may play a role in regulation of cell cycle progression via dephosphorylation of its substrates whose appropriate phosphorylation states might be crucial for cell proliferation. Selectively associates with integrin linked kinase (ILK), to modulate cell adhesion and growth factor signaling. Inhibits the ILK-GSK3B signaling axis and may play an important role in inhibiting oncogenic transformation. The sequence is that of Integrin-linked kinase-associated serine/threonine phosphatase 2C (Ilkap) from Rattus norvegicus (Rat).